The sequence spans 287 residues: F420-non-reducing hydrogenase vhu subunit G (287 aa).

The protein belongs to the [NiFe]/[NiFeSe] hydrogenase small subunit family. In terms of assembly, the F420-non-reducing hydrogenase vhu is composed of four subunits; VhuA, VhuD, VhuG and VhuU.

In Methanococcus voltae, this protein is F420-non-reducing hydrogenase vhu subunit G (vhuG).